Here is a 156-residue protein sequence, read N- to C-terminus: MIKKNRDAEVYALGQHICMSAHKARRVIDQIRGRSYEEALMILELMPYRACYPIFKLVYSAAANASHNMGFNEADSVISKAEVNDGTSVKKLKPRARGRSYLIKRPTCHITIVLKDIYLDEKYIIWLRKYGWIYRNKYTDMTCRDMYGSGGVWDKK.

It belongs to the universal ribosomal protein uL22 family. Part of the 50S ribosomal subunit.

The protein resides in the plastid. Its subcellular location is the chloroplast. Functionally, this protein binds specifically to 23S rRNA. The globular domain of the protein is located near the polypeptide exit tunnel on the outside of the subunit, while an extended beta-hairpin is found that lines the wall of the exit tunnel in the center of the 70S ribosome. The protein is Large ribosomal subunit protein uL22c (rpl22) of Buxus microphylla (Littleleaf boxwood).